A 160-amino-acid chain; its full sequence is SsrA-binding protein (160 aa).

It belongs to the SmpB family.

Its subcellular location is the cytoplasm. Its function is as follows. Required for rescue of stalled ribosomes mediated by trans-translation. Binds to transfer-messenger RNA (tmRNA), required for stable association of tmRNA with ribosomes. tmRNA and SmpB together mimic tRNA shape, replacing the anticodon stem-loop with SmpB. tmRNA is encoded by the ssrA gene; the 2 termini fold to resemble tRNA(Ala) and it encodes a 'tag peptide', a short internal open reading frame. During trans-translation Ala-aminoacylated tmRNA acts like a tRNA, entering the A-site of stalled ribosomes, displacing the stalled mRNA. The ribosome then switches to translate the ORF on the tmRNA; the nascent peptide is terminated with the 'tag peptide' encoded by the tmRNA and targeted for degradation. The ribosome is freed to recommence translation, which seems to be the essential function of trans-translation. The sequence is that of SsrA-binding protein from Chloroflexus aurantiacus (strain ATCC 29364 / DSM 637 / Y-400-fl).